A 189-amino-acid chain; its full sequence is Autophagy receptor ATG45 (189 aa).

Positions 1–96 (MSNFLLVIPE…TNNILHFKDN (96 aa)) are binds glycogen. The required for sequestration into autophagosomes stretch occupies residues 97-189 (EASQLMDIPL…AKKVKTYWNK (93 aa)). The residue at position 107 (Ser-107) is a Phosphoserine. Residues 127–130 (YVNL) carry the ATG8 interaction motif (AIM) motif. Ser-172 carries the post-translational modification Phosphoserine. Positions 176 to 187 (LMCIAKKVKTYW) are may facilitate interactions with the autophagosome membrane.

Interacts with ATG8.

The protein resides in the cytoplasm. It localises to the cytosol. Its subcellular location is the cytoplasmic vesicle. The protein localises to the autophagosome. In terms of biological role, autophagy receptor for glycogen that facilitates the sequestration of glycogen assemblies into autophagosomes as part of bulk autophagy; the autophagy of glycogen (glycophagy) is stimulated during prolonged nitrogen starvation and during sporulation. The chain is Autophagy receptor ATG45 from Saccharomyces cerevisiae (strain ATCC 204508 / S288c) (Baker's yeast).